Reading from the N-terminus, the 79-residue chain is uncharacterized protein (79 aa).

It belongs to the asfivirus D79L family.

This is an uncharacterized protein from African swine fever virus (strain Badajoz 1971 Vero-adapted) (Ba71V).